The primary structure comprises 245 residues: Pyridoxine 5'-phosphate synthase (245 aa).

Position 7 (N7) interacts with 3-amino-2-oxopropyl phosphate. 9 to 10 (DH) provides a ligand contact to 1-deoxy-D-xylulose 5-phosphate. R18 provides a ligand contact to 3-amino-2-oxopropyl phosphate. H43 acts as the Proton acceptor in catalysis. 1-deoxy-D-xylulose 5-phosphate contacts are provided by R45 and H50. The active-site Proton acceptor is E70. T100 serves as a coordination point for 1-deoxy-D-xylulose 5-phosphate. Residue H190 is the Proton donor of the active site. Residues G191 and 212–213 (GH) contribute to the 3-amino-2-oxopropyl phosphate site.

Belongs to the PNP synthase family. As to quaternary structure, homooctamer; tetramer of dimers.

It localises to the cytoplasm. It carries out the reaction 3-amino-2-oxopropyl phosphate + 1-deoxy-D-xylulose 5-phosphate = pyridoxine 5'-phosphate + phosphate + 2 H2O + H(+). The protein operates within cofactor biosynthesis; pyridoxine 5'-phosphate biosynthesis; pyridoxine 5'-phosphate from D-erythrose 4-phosphate: step 5/5. Functionally, catalyzes the complicated ring closure reaction between the two acyclic compounds 1-deoxy-D-xylulose-5-phosphate (DXP) and 3-amino-2-oxopropyl phosphate (1-amino-acetone-3-phosphate or AAP) to form pyridoxine 5'-phosphate (PNP) and inorganic phosphate. The polypeptide is Pyridoxine 5'-phosphate synthase (Prochlorococcus marinus (strain MIT 9303)).